The chain runs to 384 residues: Outer membrane protein assembly factor BamC (384 aa).

The first 23 residues, 1-23, serve as a signal peptide directing secretion; that stretch reads MNKLNSVVVARGAVAVLLIGLAG. Cys24 carries N-palmitoyl cysteine lipidation. The S-diacylglycerol cysteine moiety is linked to residue Cys24. Disordered stretches follow at residues 47–70 and 251–273; these read LEVP…TSGK and QAAQ…SGTL.

The protein belongs to the BamC family. As to quaternary structure, part of the Bam complex.

Its subcellular location is the cell outer membrane. In terms of biological role, part of the outer membrane protein assembly complex, which is involved in assembly and insertion of beta-barrel proteins into the outer membrane. The protein is Outer membrane protein assembly factor BamC of Accumulibacter regalis.